The primary structure comprises 274 residues: Acetyl-coenzyme A carboxylase carboxyl transferase subunit beta (274 aa).

In terms of domain architecture, CoA carboxyltransferase N-terminal spans 16 to 274; the sequence is LWTKCEECKN…LLNLLFYKNA (259 aa). Cysteine 20, cysteine 23, cysteine 39, and cysteine 42 together coordinate Zn(2+). The C4-type zinc-finger motif lies at 20 to 42; the sequence is CEECKNILLAQELETNFYVCPKC.

The protein belongs to the AccD/PCCB family. Acetyl-CoA carboxylase is a heterohexamer composed of biotin carboxyl carrier protein (AccB), biotin carboxylase (AccC) and two subunits each of ACCase subunit alpha (AccA) and ACCase subunit beta (AccD). Requires Zn(2+) as cofactor.

The protein localises to the cytoplasm. The catalysed reaction is N(6)-carboxybiotinyl-L-lysyl-[protein] + acetyl-CoA = N(6)-biotinyl-L-lysyl-[protein] + malonyl-CoA. The protein operates within lipid metabolism; malonyl-CoA biosynthesis; malonyl-CoA from acetyl-CoA: step 1/1. Component of the acetyl coenzyme A carboxylase (ACC) complex. Biotin carboxylase (BC) catalyzes the carboxylation of biotin on its carrier protein (BCCP) and then the CO(2) group is transferred by the transcarboxylase to acetyl-CoA to form malonyl-CoA. The polypeptide is Acetyl-coenzyme A carboxylase carboxyl transferase subunit beta (Hydrogenobaculum sp. (strain Y04AAS1)).